A 163-amino-acid polypeptide reads, in one-letter code: Nucleotide-binding protein CJE0423 (163 aa).

The protein belongs to the YajQ family.

Its function is as follows. Nucleotide-binding protein. This Campylobacter jejuni (strain RM1221) protein is Nucleotide-binding protein CJE0423.